We begin with the raw amino-acid sequence, 611 residues long: Probable potassium transport system protein Kup 1 (611 aa).

Helical transmembrane passes span 6 to 26 (LMVG…LYTM), 44 to 64 (MLSL…VAVV), 90 to 110 (LGVI…GAIT), 129 to 149 (ISPY…ALQA), 158 to 178 (LFGP…LFGI), 193 to 213 (GLSY…AVFL), 237 to 257 (WYGL…AVVV), 280 to 300 (LVAL…SGAF), 328 to 348 (IYIG…TLGF), 354 to 374 (LAAA…ILMF), 385 to 405 (LAAS…FVSA), and 410 to 430 (VLEG…LMMT).

It belongs to the HAK/KUP transporter (TC 2.A.72) family.

It localises to the cell inner membrane. It catalyses the reaction K(+)(in) + H(+)(in) = K(+)(out) + H(+)(out). Functionally, transport of potassium into the cell. Likely operates as a K(+):H(+) symporter. This is Probable potassium transport system protein Kup 1 from Bradyrhizobium sp. (strain BTAi1 / ATCC BAA-1182).